A 233-amino-acid polypeptide reads, in one-letter code: Small ribosomal subunit protein uS3 (233 aa).

A KH type-2 domain is found at 39–107 (VRQFLTKELS…PAQINIAEVR (69 aa)).

The protein belongs to the universal ribosomal protein uS3 family. Part of the 30S ribosomal subunit. Forms a tight complex with proteins S10 and S14.

In terms of biological role, binds the lower part of the 30S subunit head. Binds mRNA in the 70S ribosome, positioning it for translation. In Vibrio vulnificus (strain CMCP6), this protein is Small ribosomal subunit protein uS3.